Here is a 367-residue protein sequence, read N- to C-terminus: UDP-N-acetylglucosamine--N-acetylmuramyl-(pentapeptide) pyrophosphoryl-undecaprenol N-acetylglucosamine transferase (367 aa).

Residues 13 to 15 (TGG), Arg-168, Ser-196, Ile-252, and Gln-297 each bind UDP-N-acetyl-alpha-D-glucosamine.

The protein belongs to the glycosyltransferase 28 family. MurG subfamily.

The protein localises to the cell inner membrane. The enzyme catalyses di-trans,octa-cis-undecaprenyl diphospho-N-acetyl-alpha-D-muramoyl-L-alanyl-D-glutamyl-meso-2,6-diaminopimeloyl-D-alanyl-D-alanine + UDP-N-acetyl-alpha-D-glucosamine = di-trans,octa-cis-undecaprenyl diphospho-[N-acetyl-alpha-D-glucosaminyl-(1-&gt;4)]-N-acetyl-alpha-D-muramoyl-L-alanyl-D-glutamyl-meso-2,6-diaminopimeloyl-D-alanyl-D-alanine + UDP + H(+). Its pathway is cell wall biogenesis; peptidoglycan biosynthesis. Cell wall formation. Catalyzes the transfer of a GlcNAc subunit on undecaprenyl-pyrophosphoryl-MurNAc-pentapeptide (lipid intermediate I) to form undecaprenyl-pyrophosphoryl-MurNAc-(pentapeptide)GlcNAc (lipid intermediate II). This is UDP-N-acetylglucosamine--N-acetylmuramyl-(pentapeptide) pyrophosphoryl-undecaprenol N-acetylglucosamine transferase from Methylibium petroleiphilum (strain ATCC BAA-1232 / LMG 22953 / PM1).